The sequence spans 234 residues: OVARIAN TUMOR DOMAIN-containing deubiquitinating enzyme 3 (234 aa).

The 159-residue stretch at 76–234 folds into the OTU domain; it reads YAVDRVKGDG…SGRNHYDLLR (159 aa). The cys-loop stretch occupies residues 81–87; it reads VKGDGRC. D84 is a catalytic residue. C87 acts as the Nucleophile in catalysis. The tract at residues 154-164 is variable-loop; that stretch reads IGRHDFWGGES. The his-loop stretch occupies residues 224–229; it reads YSGRNH. H229 is a catalytic residue.

This sequence belongs to the peptidase C85 family.

The catalysed reaction is Thiol-dependent hydrolysis of ester, thioester, amide, peptide and isopeptide bonds formed by the C-terminal Gly of ubiquitin (a 76-residue protein attached to proteins as an intracellular targeting signal).. Functionally, hydrolase that can remove conjugated ubiquitin from proteins in vitro and may therefore play an important regulatory role at the level of protein turnover by preventing degradation. Cysteine protease with a preference for 'Lys-63' over 'Lys-48' over 'Met-1' -linked ubiquitin (UB) tetramers (e.g. Ub3 and Ub4) as substrates. Also cleaves RUB-GST fusion. This is OVARIAN TUMOR DOMAIN-containing deubiquitinating enzyme 3 from Arabidopsis thaliana (Mouse-ear cress).